The following is a 404-amino-acid chain: Argininosuccinate synthase (404 aa).

Ala7–Ser15 lines the ATP pocket. Residues Tyr85 and Ser90 each coordinate L-citrulline. Gly115 provides a ligand contact to ATP. 3 residues coordinate L-aspartate: Thr117, Asn121, and Asp122. Residue Asn121 coordinates L-citrulline. L-citrulline is bound by residues Arg125, Ser178, Ser187, Glu264, and Tyr276.

The protein belongs to the argininosuccinate synthase family. Type 1 subfamily. As to quaternary structure, homotetramer.

It is found in the cytoplasm. It catalyses the reaction L-citrulline + L-aspartate + ATP = 2-(N(omega)-L-arginino)succinate + AMP + diphosphate + H(+). It functions in the pathway amino-acid biosynthesis; L-arginine biosynthesis; L-arginine from L-ornithine and carbamoyl phosphate: step 2/3. In Rhodopirellula baltica (strain DSM 10527 / NCIMB 13988 / SH1), this protein is Argininosuccinate synthase.